The following is a 501-amino-acid chain: Sodium-coupled neutral amino acid symporter 2 (501 aa).

The segment at 1–26 (MSSAEMGKFDISPDEDSSSYSSNSND) is disordered. At 1–77 (MSSAEMGKFD…HPGTTSFGMS (77 aa)) the chain is on the cytoplasmic side. Residues 1–97 (MSSAEMGKFD…SGILGLSYAM (97 aa)) form a regulates protein turnover upon amino acid deprivation region. A helical transmembrane segment spans residues 78–97 (VFNLSNAIVGSGILGLSYAM). Asparagine 83 is a binding site for Na(+). Residues 98 to 103 (ANTGIA) are Extracellular-facing. A helical membrane pass occupies residues 104-124 (LFVILLLVVSILSLYSVHLLL). Residues 125–159 (KTANEGGSLLYEQLGMKAFGMPGKLAASGSITMQN) lie on the Cytoplasmic side of the membrane. The helical transmembrane segment at 160 to 178 (IGAMSSYLFIVKYELPLVI) threads the bilayer. Topologically, residues 179–189 (KTFMNIEENAG) are extracellular. A helical membrane pass occupies residues 190–210 (HWYLNGDYLVLLVSVILILPL). Topologically, residues 211–218 (SLLKNLGY) are cytoplasmic. The helical transmembrane segment at 219–239 (LGYTSGFSLLCMVFFLIVVIW) threads the bilayer. The Extracellular segment spans residues 240–287 (KMFQIPCPMESDIINATLINATLAPFADENITISDACKPEYFIFNSQT). Cysteine 246 and cysteine 276 are joined by a disulfide. Asparagine 254 and asparagine 259 each carry an N-linked (GlcNAc...) asparagine glycan. The helical transmembrane segment at 288–308 (VYAVPILTFSFVCHPAILPIY) threads the bilayer. At 309-324 (EELKSRSRKRMMNVSY) the chain is on the cytoplasmic side. The chain crosses the membrane as a helical span at residues 325 to 345 (VSFFAMFLMYLLAALFGYLTF). The Extracellular segment spans residues 346–366 (YGRVESELLHTYSAFLGADIL). The chain crosses the membrane as a helical span at residues 367-387 (LLIVRLAVLMAVTLTVPVVIF). Threonine 381 is a binding site for Na(+). At 388–408 (PIRSSVTQLLWAGKEFSWWRH) the chain is on the cytoplasmic side. A helical membrane pass occupies residues 409–429 (CSITVVLLAFTNVLVIFVPTI). At 430–431 (RD) the chain is on the extracellular side. Residues 432–452 (IFGFIGASAAAMLIFILPSAF) form a helical membrane-spanning segment. Residues 453–467 (YIKLVKKEPMKSVQK) are Cytoplasmic-facing. Residues 468 to 490 (IGAALFFLSGILVMTGCMTLIIL) traverse the membrane as a helical segment. Over 491–501 (DWIHTDASDGH) the chain is Extracellular.

This sequence belongs to the amino acid/polyamine transporter 2 family.

It is found in the cell membrane. It catalyses the reaction L-alanine(in) + Na(+)(in) = L-alanine(out) + Na(+)(out). The catalysed reaction is glycine(in) + Na(+)(in) = glycine(out) + Na(+)(out). The enzyme catalyses L-serine(in) + Na(+)(in) = L-serine(out) + Na(+)(out). It carries out the reaction L-proline(in) + Na(+)(in) = L-proline(out) + Na(+)(out). It catalyses the reaction L-methionine(in) + Na(+)(in) = L-methionine(out) + Na(+)(out). The catalysed reaction is L-histidine(in) + Na(+)(in) = L-histidine(out) + Na(+)(out). The enzyme catalyses L-asparagine(in) + Na(+)(in) = L-asparagine(out) + Na(+)(out). It carries out the reaction L-glutamine(in) + Na(+)(in) = L-glutamine(out) + Na(+)(out). It catalyses the reaction L-threonine(in) + Na(+)(in) = L-threonine(out) + Na(+)(out). The catalysed reaction is L-leucine(in) + Na(+)(in) = L-leucine(out) + Na(+)(out). The enzyme catalyses L-phenylalanine(in) + Na(+)(in) = L-phenylalanine(out) + Na(+)(out). Inhibited by N-methyl-D-glucamine. Inhibited by choline. Allosteric regulation of sodium ions binding by pH. In terms of biological role, symporter that cotransports neutral amino acids and sodium ions from the extracellular to the intracellular side of the cell membrane. The transport is pH-sensitive, Li(+)-intolerant, electrogenic, driven by the Na(+) electrochemical gradient and cotransports of neutral amino acids and sodium ions with a stoichiometry of 1:1. This is Sodium-coupled neutral amino acid symporter 2 from Gallus gallus (Chicken).